A 963-amino-acid chain; its full sequence is Non-ribosomal peptide synthetase CmlP (963 aa).

One can recognise a Carrier domain in the interval 492–568; that stretch reads GEDAAELRRV…AAFLRHLRGE (77 aa). An O-(pantetheine 4'-phosphoryl)serine modification is found at S526. The segment at 928-963 is disordered; that stretch reads GRLLGTPPDTPAGDRPERTGTTAEAQNGAAHAPTPR.

Belongs to the ATP-dependent AMP-binding enzyme family. Requires pantetheine 4'-phosphate as cofactor.

The enzyme catalyses 4-amino-L-phenylalanine + holo-[peptidyl-carrier protein] + ATP = 4-amino-L-phenylalanyl-[peptidyl-carrier protein] + AMP + diphosphate. Its pathway is antibiotic biosynthesis. Its function is as follows. Involved in chloramphenicol biosynthesis. Activates 4-amino-L-phenylalanine by adenylation and loads it onto its peptidyl carrier domain, via a thioester linkage to the phosphopanthetheine moiety. Can also adenylate tyrosine and phenylalanine at low rates, but not L-p-nitrophenylalanine or threo-phenylserine. The sequence is that of Non-ribosomal peptide synthetase CmlP from Streptomyces venezuelae (strain ATCC 10712 / CBS 650.69 / DSM 40230 / JCM 4526 / NBRC 13096 / PD 04745).